The primary structure comprises 365 residues: Aminomethyltransferase (365 aa).

Belongs to the GcvT family. As to quaternary structure, the glycine cleavage system is composed of four proteins: P, T, L and H.

It catalyses the reaction N(6)-[(R)-S(8)-aminomethyldihydrolipoyl]-L-lysyl-[protein] + (6S)-5,6,7,8-tetrahydrofolate = N(6)-[(R)-dihydrolipoyl]-L-lysyl-[protein] + (6R)-5,10-methylene-5,6,7,8-tetrahydrofolate + NH4(+). Functionally, the glycine cleavage system catalyzes the degradation of glycine. The protein is Aminomethyltransferase of Chlorobaculum parvum (strain DSM 263 / NCIMB 8327) (Chlorobium vibrioforme subsp. thiosulfatophilum).